The primary structure comprises 447 residues: Tubulin beta-2 chain (447 aa).

The GTP site is built by Gln11, Glu69, Ser138, Gly142, Thr143, Gly144, Asn204, and Asn226. Glu69 lines the Mg(2+) pocket. The segment at 419–447 (VSEYQQYQDATADDEGEYEDEEEEADLQD) is disordered. The span at 429 to 447 (TADDEGEYEDEEEEADLQD) shows a compositional bias: acidic residues.

This sequence belongs to the tubulin family. Dimer of alpha and beta chains. A typical microtubule is a hollow water-filled tube with an outer diameter of 25 nm and an inner diameter of 15 nM. Alpha-beta heterodimers associate head-to-tail to form protofilaments running lengthwise along the microtubule wall with the beta-tubulin subunit facing the microtubule plus end conferring a structural polarity. Microtubules usually have 13 protofilaments but different protofilament numbers can be found in some organisms and specialized cells. Mg(2+) serves as cofactor. In terms of tissue distribution, expressed in leaf sheaths and suspension cultured cells.

Its subcellular location is the cytoplasm. The protein localises to the cytoskeleton. Functionally, tubulin is the major constituent of microtubules, a cylinder consisting of laterally associated linear protofilaments composed of alpha- and beta-tubulin heterodimers. Microtubules grow by the addition of GTP-tubulin dimers to the microtubule end, where a stabilizing cap forms. Below the cap, tubulin dimers are in GDP-bound state, owing to GTPase activity of alpha-tubulin. This Oryza sativa subsp. japonica (Rice) protein is Tubulin beta-2 chain (TUBB2).